An 88-amino-acid polypeptide reads, in one-letter code: Chaplin-F (88 aa).

The signal sequence occupies residues 1–36 (MYNPKEHFSMSRIAKGLALTSVAAAAVAGTAGVAAA). The 41-residue stretch at 47–87 (SPGVLSGNVVQVPVHIPVNVCGNTIDVIGLLNPAFGNECEN) folds into the Chaplin domain. Cysteines 67 and 85 form a disulfide.

The protein belongs to the chaplin family. Short chaplin subfamily. Homodimer; disulfide linked. About 20% of ChpF isolated from cell wall forms disulfide-bonded homodimers.

It localises to the cell surface. The protein resides in the secreted. The protein localises to the cell wall. Its subcellular location is the fimbrium. In terms of biological role, one of 8 partially redundant surface-active proteins required for efficient formation of aerial mycelium; the short chaplins assemble into a hydrophobic, amyloidal fibrillar surface layer that envelopes and protects aerial hyphae and spores, presumably anchored to the long chaplins. Chaplins have an overlapping function with the surface-active SapB peptide; chaplins are essential on minimal medium while on rich medium both chaplins and SapB are required for efficient aerial hyphae formation. Chaplins are also involved in cell attachment to a hydrophobic surface. Forms amyloid fibrils in vitro probably composed of stacked beta-sheets, at low extracellular concentrations individually restores the ability to form aerial hyphae to a chaplin-deficient strain. A small chaplin extract (ChpD, ChpE, ChpF, ChpG and ChpH) self-assembles into 2 different amyloids; small fibrils at the air-water interface form an amphipathic membrane that resembles spore-surface structures involved in aerial hyphae formation, and hydrophilic fibrils in solution that resemble the fibers that attach cells to a hydrophobic surface. At the air-water interface the hydrophilic surface is in contact with water (probably equivalent to the peptidoglycan layer), while the hydrophobic face is exposed to the air, making the surface of the aerial hyphae hydrophobic. A small chaplin extract applied to a chaplin-deficient strain restores aerial hyphae formation. The small chaplin extract forms an amyloid-like structure similar to that seen on the surface of cells without rodlets (rdlA-rdlB deletions), and is highly surface active, reducing surface tension from 72 to 26 mJ/m(2), which probably allows escape of hyphae from an aqueous environment into air. ChpF alone is less surface active at pH 3.0 than at pH 10.0, it reduces the surface tension of water from 72.8 mN/m to 50 mN/m at pH 3.0 or to 37 mN/m at pH 10.0. ChpF and ChpG are sufficient to restore the rodlet layer and hydrophobicity to a strain deleted for the other 6 chaplin genes. This is Chaplin-F from Streptomyces coelicolor (strain ATCC BAA-471 / A3(2) / M145).